The sequence spans 289 residues: DDRGK domain-containing protein 1 (289 aa).

Residues 1 to 2 lie on the Lumenal side of the membrane; the sequence is MD. A helical membrane pass occupies residues 3 to 23; the sequence is PFILAAIISGIVIIILSIAFL. The Cytoplasmic portion of the chain corresponds to 24–289; that stretch reads RVSQVKPQAA…LINLAPVTVP (266 aa). A disordered region spans residues 65–168; it reads RHQAALEEEP…DERKKREQEE (104 aa). The segment covering 70–85 has biased composition (acidic residues); the sequence is LEEEPEIQEEADEGAP. Over residues 87 to 166 the composition is skewed to basic and acidic residues; it reads IDQKIDFDDK…AEDERKKREQ (80 aa).

Belongs to the DDRGK1 family. In terms of assembly, interacts with Atg9; the interaction is transient.

It localises to the endoplasmic reticulum membrane. Substrate adapter for ufmylation, the covalent attachment of the ubiquitin-like modifier UFM1 to substrate proteins. Required for ufmylation of Atg9; protects the nervous system during aging, possibly by stabilizing Atg9 and supporting its function. The chain is DDRGK domain-containing protein 1 from Bombyx mori (Silk moth).